The primary structure comprises 371 residues: MSL complex subunit 3B (371 aa).

Disordered stretches follow at residues 1–44 (MATL…READ) and 160–229 (EERA…SPQA). The segment covering 8-44 (PKDDGEGKDEGGSDRGDGDPKPKGKKEVEAHTRREAD) has biased composition (basic and acidic residues). One can recognise an MRG domain in the interval 44-367 (DERAVRIPIP…CEAHYSSKNP (324 aa)). Residues 206 to 216 (APRRSTRHSTH) show a composition bias toward basic residues.

It localises to the nucleus. Probable non-catalytic component of the MSL histone acetyltransferase complex, a multiprotein complex that mediates the majority of histone H4 acetylation at 'Lys-16' (H4K16ac), an epigenetic mark that prevents chromatin compaction. The chain is MSL complex subunit 3B from Rattus norvegicus (Rat).